The primary structure comprises 170 residues: ATP synthase F(1) complex subunit delta, mitochondrial (170 aa).

The transit peptide at 1 to 33 (MIRSIIKSSNNLLKSNVAINSNKRFFATEASAT) directs the protein to the mitochondrion.

The protein belongs to the ATPase epsilon chain family. In terms of assembly, component of the ATP synthase complex composed at least of ATP5F1A/subunit alpha, ATP5F1B/subunit beta, ATP5MC1/subunit c (homooctomer), MT-ATP6/subunit a, MT-ATP8/subunit 8, ATP5ME/subunit e, ATP5MF/subunit f, ATP5MG/subunit g, ATP5MK/subunit k, ATP5MJ/subunit j, ATP5F1C/subunit gamma, ATP5F1D/subunit delta, ATP5F1E/subunit epsilon, ATP5PF/subunit F6, ATP5PB/subunit b, ATP5PD/subunit d, ATP5PO/subunit OSCP. ATP synthase complex consists of a soluble F(1) head domain (subunits alpha(3) and beta(3)) - the catalytic core - and a membrane F(0) domain - the membrane proton channel (subunits c, a, 8, e, f, g, k and j). These two domains are linked by a central stalk (subunits gamma, delta, and epsilon) rotating inside the F1 region and a stationary peripheral stalk (subunits F6, b, d, and OSCP).

Its subcellular location is the mitochondrion. It is found in the mitochondrion inner membrane. Functionally, subunit delta, of the mitochondrial membrane ATP synthase complex (F(1)F(0) ATP synthase or Complex V) that produces ATP from ADP in the presence of a proton gradient across the membrane which is generated by electron transport complexes of the respiratory chain. ATP synthase complex consist of a soluble F(1) head domain - the catalytic core - and a membrane F(1) domain - the membrane proton channel. These two domains are linked by a central stalk rotating inside the F(1) region and a stationary peripheral stalk. During catalysis, ATP synthesis in the catalytic domain of F(1) is coupled via a rotary mechanism of the central stalk subunits to proton translocation. In vivo, can only synthesize ATP although its ATP hydrolase activity can be activated artificially in vitro. With the central stalk subunit gamma, is essential for the biogenesis of F(1) catalytic part of the ATP synthase complex namely in the formation of F1 assembly intermediate. The chain is ATP synthase F(1) complex subunit delta, mitochondrial from Dictyostelium discoideum (Social amoeba).